The sequence spans 210 residues: MKSNRPKHIPITKIKNQLLSSLDNRALVLIGLMGVGKSVIGKRIATMLCLPFYDSDQEIEKAAQMTITELFKTYGESEFRALEQRVILNLMKNRPLVLATGGGAYINEDIRKAVHKNGISIWLKVDLDTLMQRVSKRPTRPLLQTENPKETMQKLMKQRYPIYAKANLTINSHKENRQTVAQNVIRSVQHYLDTEKNDRNNQHANQNCHC.

Position 34–39 (34–39 (GVGKSV)) interacts with ATP. S38 lines the Mg(2+) pocket. Substrate-binding residues include D56, R80, and G102. R140 provides a ligand contact to ATP. R159 lines the substrate pocket.

This sequence belongs to the shikimate kinase family. As to quaternary structure, monomer. The cofactor is Mg(2+).

Its subcellular location is the cytoplasm. It carries out the reaction shikimate + ATP = 3-phosphoshikimate + ADP + H(+). The protein operates within metabolic intermediate biosynthesis; chorismate biosynthesis; chorismate from D-erythrose 4-phosphate and phosphoenolpyruvate: step 5/7. Catalyzes the specific phosphorylation of the 3-hydroxyl group of shikimic acid using ATP as a cosubstrate. The polypeptide is Shikimate kinase (Bartonella henselae (strain ATCC 49882 / DSM 28221 / CCUG 30454 / Houston 1) (Rochalimaea henselae)).